Consider the following 374-residue polypeptide: Anhydro-N-acetylmuramic acid kinase (374 aa).

G12–D19 is an ATP binding site.

The protein belongs to the anhydro-N-acetylmuramic acid kinase family.

The catalysed reaction is 1,6-anhydro-N-acetyl-beta-muramate + ATP + H2O = N-acetyl-D-muramate 6-phosphate + ADP + H(+). Its pathway is amino-sugar metabolism; 1,6-anhydro-N-acetylmuramate degradation. It participates in cell wall biogenesis; peptidoglycan recycling. In terms of biological role, catalyzes the specific phosphorylation of 1,6-anhydro-N-acetylmuramic acid (anhMurNAc) with the simultaneous cleavage of the 1,6-anhydro ring, generating MurNAc-6-P. Is required for the utilization of anhMurNAc either imported from the medium or derived from its own cell wall murein, and thus plays a role in cell wall recycling. The sequence is that of Anhydro-N-acetylmuramic acid kinase from Salmonella arizonae (strain ATCC BAA-731 / CDC346-86 / RSK2980).